The chain runs to 159 residues: Urease subunit beta 2 (159 aa).

Positions 1 to 24 are disordered; that stretch reads MAKEPTKAAHPQPEQTKTNHKAHR.

The protein belongs to the urease beta subunit family. Heterotrimer of UreA (gamma), UreB (beta) and UreC (alpha) subunits. Three heterotrimers associate to form the active enzyme.

The protein resides in the cytoplasm. The catalysed reaction is urea + 2 H2O + H(+) = hydrogencarbonate + 2 NH4(+). It participates in nitrogen metabolism; urea degradation; CO(2) and NH(3) from urea (urease route): step 1/1. Its function is as follows. Disrupting the ure2 operon has no effect on urease activity, or pathogen survival in BALB/c mice when inoculated by gavage, but confers slightly enhanced resistance to low pH killing in vitro. In Brucella suis biovar 1 (strain 1330), this protein is Urease subunit beta 2.